We begin with the raw amino-acid sequence, 253 residues long: 5'-nucleotidase SurE (253 aa).

A divalent metal cation-binding residues include Asp8, Asp9, Ser39, and Asn92.

This sequence belongs to the SurE nucleotidase family. A divalent metal cation serves as cofactor.

It localises to the cytoplasm. The enzyme catalyses a ribonucleoside 5'-phosphate + H2O = a ribonucleoside + phosphate. Its function is as follows. Nucleotidase that shows phosphatase activity on nucleoside 5'-monophosphates. The protein is 5'-nucleotidase SurE of Burkholderia pseudomallei (strain 1710b).